Reading from the N-terminus, the 2137-residue chain is Pecanex-like protein 2 (2137 aa).

The next 2 helical transmembrane spans lie at C34 to P54 and A57 to V77. 4 disordered regions span residues Q92–S163, N225–G251, E402–V530, and S545–N572. The segment covering S96–T114 has biased composition (basic and acidic residues). Residues H116–I125 show a composition bias toward polar residues. N136 carries an N-linked (GlcNAc...) asparagine glycan. Over residues S146 to S156 the composition is skewed to polar residues. N449 carries N-linked (GlcNAc...) asparagine glycosylation. Residues I479 to W490 show a composition bias toward basic and acidic residues. Positions G510–K520 are enriched in polar residues. N550, N572, N587, N598, and N613 each carry an N-linked (GlcNAc...) asparagine glycan. Over residues A593–E602 the composition is skewed to polar residues. Residues A593–D612 are disordered. 2 disordered regions span residues E621–P655 and A740–P763. Residues G630 to P655 show a composition bias toward polar residues. Residues S746–S760 show a composition bias toward low complexity. 13 helical membrane-spanning segments follow: residues L844–F864, M868–V888, Q901–L921, Y952–I972, I983–V1003, H1029–S1049, L1099–L1119, F1124–L1144, Y1193–N1213, S1237–F1257, S1265–H1285, G1302–F1322, and T1324–I1344. N-linked (GlcNAc...) asparagine glycans are attached at residues N1412, N1553, and N1818. The tract at residues R1876–P1958 is disordered. Composition is skewed to polar residues over residues S1901–E1910, G1920–R1929, and S1937–P1958. A glycan (N-linked (GlcNAc...) asparagine) is linked at N2054.

It belongs to the pecanex family.

The protein localises to the membrane. Its function is as follows. May play a role in tumorigenesis of colorectal carcinomas with high microsatellite instability (MSI-H). The protein is Pecanex-like protein 2 of Homo sapiens (Human).